A 150-amino-acid chain; its full sequence is uncharacterized protein (150 aa).

It belongs to the aspartate/glutamate racemases family.

This is an uncharacterized protein from Pectobacterium carotovorum subsp. carotovorum (Erwinia carotovora subsp. carotovora).